Consider the following 125-residue polypeptide: MSFSGKYQQVSQENFEPFMKAIGLPDEVIQQVKELKSTSEIEQNGNDFKITITTGPKVTVNKFTIGKETEMDTITGEKIKTVFHLDGNKLKVSLKGIESVTELADPNTITMTLGDVVYKTTSKRM.

This sequence belongs to the calycin superfamily. Fatty-acid binding protein (FABP) family.

It localises to the cytoplasm. In Takifugu rubripes (Japanese pufferfish), this protein is Fatty acid-binding protein, liver-type (fabp1).